The primary structure comprises 197 residues: Probable molybdenum cofactor guanylyltransferase (197 aa).

Residues 10-12 (LCG), K22, D73, and D102 each bind GTP. D102 serves as a coordination point for Mg(2+).

This sequence belongs to the MobA family. Mg(2+) is required as a cofactor.

The protein localises to the cytoplasm. It carries out the reaction Mo-molybdopterin + GTP + H(+) = Mo-molybdopterin guanine dinucleotide + diphosphate. Transfers a GMP moiety from GTP to Mo-molybdopterin (Mo-MPT) cofactor (Moco or molybdenum cofactor) to form Mo-molybdopterin guanine dinucleotide (Mo-MGD) cofactor. This Methanothermobacter thermautotrophicus (strain ATCC 29096 / DSM 1053 / JCM 10044 / NBRC 100330 / Delta H) (Methanobacterium thermoautotrophicum) protein is Probable molybdenum cofactor guanylyltransferase.